The primary structure comprises 330 residues: GTPase Obg (330 aa).

Residues 1-159 enclose the Obg domain; the sequence is MNFIDEVKIC…MWIHLSLKLL (159 aa). The region spanning 160–327 is the OBG-type G domain; sequence SDVGLVGLPN…IVKLALKTIK (168 aa). Residues 166-173, 191-195, 212-215, 279-282, and 308-310 contribute to the GTP site; these read GLPNAGKS, FTTLV, DIPG, NKCD, and STY. Residues serine 173 and threonine 193 each coordinate Mg(2+).

Belongs to the TRAFAC class OBG-HflX-like GTPase superfamily. OBG GTPase family. In terms of assembly, monomer. Mg(2+) serves as cofactor.

The protein localises to the cytoplasm. An essential GTPase which binds GTP, GDP and possibly (p)ppGpp with moderate affinity, with high nucleotide exchange rates and a fairly low GTP hydrolysis rate. Plays a role in control of the cell cycle, stress response, ribosome biogenesis and in those bacteria that undergo differentiation, in morphogenesis control. This chain is GTPase Obg, found in Rickettsia felis (strain ATCC VR-1525 / URRWXCal2) (Rickettsia azadi).